We begin with the raw amino-acid sequence, 600 residues long: Aspartate--tRNA(Asp/Asn) ligase (600 aa).

Glutamate 181 is an L-aspartate binding site. The tract at residues 205 to 208 (QQFK) is aspartate. Residue arginine 227 coordinates L-aspartate. ATP is bound by residues 227–229 (RDE) and glutamine 236. Position 455 (histidine 455) interacts with L-aspartate. Position 489 (glutamate 489) interacts with ATP. Arginine 496 lines the L-aspartate pocket. An ATP-binding site is contributed by 541-544 (GIDR).

Belongs to the class-II aminoacyl-tRNA synthetase family. Type 1 subfamily. In terms of assembly, homodimer.

The protein resides in the cytoplasm. The enzyme catalyses tRNA(Asx) + L-aspartate + ATP = L-aspartyl-tRNA(Asx) + AMP + diphosphate. Aspartyl-tRNA synthetase with relaxed tRNA specificity since it is able to aspartylate not only its cognate tRNA(Asp) but also tRNA(Asn). Reaction proceeds in two steps: L-aspartate is first activated by ATP to form Asp-AMP and then transferred to the acceptor end of tRNA(Asp/Asn). In Rubrobacter xylanophilus (strain DSM 9941 / JCM 11954 / NBRC 16129 / PRD-1), this protein is Aspartate--tRNA(Asp/Asn) ligase.